The following is a 291-amino-acid chain: Beta-lactamase CTX-M-4 (291 aa).

The first 28 residues, 1-28, serve as a signal peptide directing secretion; the sequence is MMTQSIRRSMLTVMATLPLLFSSATLHA. Residue Ser-73 is the Acyl-ester intermediate of the active site. 237-239 is a substrate binding site; that stretch reads KTG.

This sequence belongs to the class-A beta-lactamase family.

The catalysed reaction is a beta-lactam + H2O = a substituted beta-amino acid. Functionally, has cefotaxime-hydrolyzing activity. This is Beta-lactamase CTX-M-4 (bla) from Salmonella typhimurium.